The following is a 929-amino-acid chain: Band 4.1-like protein 3 (929 aa).

M1 is modified (N-acetylmethionine). The interval 1-72 (MTTESGSDSE…STPVKREIGD (72 aa)) is disordered. T2 is modified (N-acetylthreonine; in Band 4.1-like protein 3, N-terminally processed). A compositionally biased stretch (low complexity) spans 20 to 33 (QEAAGPQGQAGAQP). S96 carries the post-translational modification Phosphoserine. The FERM domain occupies 118–399 (MQCKVTLLDG…EHHTFFRLLL (282 aa)). Residues 402–528 (APPKKFLTLG…PVTALRHEGK (127 aa)) are hydrophilic. S428, S451, and S486 each carry phosphoserine. A disordered region spans residues 490–554 (LITTVTPEKK…TESDQEEDAE (65 aa)). T495 is modified (phosphothreonine). The segment covering 496–516 (PEKKAEEERVEEEDRRKKAEE) has biased composition (basic and acidic residues). T518 is subject to Phosphothreonine. Over residues 523-536 (LRHEGKTDSERTDT) the composition is skewed to basic and acidic residues. Residues H525 and S543 each carry the phosphoserine modification. Phosphothreonine is present on T545. At S547 the chain carries Phosphoserine. The segment at 559–602 (DLDKTQDELMKHQTNISELKRTFLETSTETALTNEWEKRLSTSP) is spectrin--actin-binding. Disordered stretches follow at residues 608–630 (RQED…SGEK), 665–689 (LETK…STEK), and 705–807 (VHAS…SPGG). The residue at position 725 (T725) is a Phosphothreonine. Residues 726–737 (PTDRRHTGKGKE) show a composition bias toward basic and acidic residues. Residues 777 to 929 (RTSEGLEQKS…TEITPEDGED (153 aa)) are C-terminal (CTD). A compositionally biased stretch (low complexity) spans 789-802 (ESSTVRVESTSVGS). Residues S802 and S804 each carry the phosphoserine modification. T923 carries the phosphothreonine modification.

Interacts (via FERM domain) with CADM1. Interacts (via FERM domain) with PRMT3; the interaction is direct and inhibits the protein-arginine N-methyltransferase activity of PRMT3. Interacts with PRMT5. Interacts with PRMT6. As to quaternary structure, has the complete spectrin--actin-binding (SAB) domain and fully interacts with spectrin and actin. In terms of tissue distribution, detected in brain (at protein level). Highest expression in brain, lower in testis, adrenal gland, heart and kidney. Also present in muscle and epithelial cells. Isoform 1 is expressed in brain, isoform 2 is expressed in heart and isoform 3 is mostly expressed in kidney but also in heart and brain. Isoform 6 seems to be most abundant in kidney while isoform 4 and isoform 5 are predominantly expressed in heart and brain.

It is found in the cytoplasm. Its subcellular location is the cytoskeleton. It localises to the cell membrane. The protein resides in the cell junction. Its function is as follows. Tumor suppressor that inhibits cell proliferation and promotes apoptosis. Modulates the activity of protein arginine N-methyltransferases, including PRMT3 and PRMT5. The chain is Band 4.1-like protein 3 from Mus musculus (Mouse).